The sequence spans 649 residues: ATP-dependent zinc metalloprotease FtsH (649 aa).

The Cytoplasmic portion of the chain corresponds to 1-18 (MQCSYPLARQLERSSALN). Residues 19 to 39 (NNLFQKAAIWLVIALVLFTVF) form a helical membrane-spanning segment. The Periplasmic segment spans residues 40 to 115 (KQFDKPRAQD…VTGKADDEPN (76 aa)). Residues 116–136 (VLVQALYYLGPTLLIIVFWFY) traverse the membrane as a helical segment. Topologically, residues 137 to 649 (MMRQMQGGGK…PATARADETV (513 aa)) are cytoplasmic. Residue 210-217 (GPPGTGKT) participates in ATP binding. His432 serves as a coordination point for Zn(2+). Glu433 is a catalytic residue. His436 and Asp508 together coordinate Zn(2+). A disordered region spans residues 606-649 (IMAGRPPRPPRGAQGPNSGGNTPPGGSPVAPTNAPATARADETV). A compositionally biased stretch (low complexity) spans 616-626 (RGAQGPNSGGN).

The protein in the central section; belongs to the AAA ATPase family. It in the C-terminal section; belongs to the peptidase M41 family. As to quaternary structure, homohexamer. Requires Zn(2+) as cofactor.

It localises to the cell inner membrane. Acts as a processive, ATP-dependent zinc metallopeptidase for both cytoplasmic and membrane proteins. Plays a role in the quality control of integral membrane proteins. The chain is ATP-dependent zinc metalloprotease FtsH from Cupriavidus metallidurans (strain ATCC 43123 / DSM 2839 / NBRC 102507 / CH34) (Ralstonia metallidurans).